The following is a 180-amino-acid chain: Succinate dehydrogenase cytochrome B subunit, mitochondrial (180 aa).

The Mitochondrial matrix portion of the chain corresponds to 1–82; sequence MFATRSFCLS…WYLSSLHRIT (82 aa). Residues 83–103 form a helical membrane-spanning segment; it reads GCVVAGTLYAFAMGYLVAPLA. The Mitochondrial intermembrane portion of the chain corresponds to 104–122; it reads GYSLDTATISGLIQQVPTW. A helical membrane pass occupies residues 123–143; sequence IKVPAKFVISYPLTFHIFNGI. Residue His-138 coordinates heme. Over 144–159 the chain is Mitochondrial matrix; that stretch reads RHLIWDTTKELSLKGV. A helical transmembrane segment spans residues 160 to 180; that stretch reads YRTGYAVLALSVLTSGYFAMI.

This sequence belongs to the cytochrome b560 family. In terms of assembly, forms part of complex II containing four subunits: a 70 kDa flavoprotein (FP), a 27 kDa iron-sulfur protein (IP), a cytochrome B and a membrane-anchoring protein. It depends on heme as a cofactor.

It is found in the mitochondrion inner membrane. The protein operates within carbohydrate metabolism; tricarboxylic acid cycle. Its function is as follows. Membrane-anchoring subunit of succinate dehydrogenase (SDH) that is involved in complex II of the mitochondrial electron transport chain and is responsible for transferring electrons from succinate to ubiquinone (coenzyme Q). The polypeptide is Succinate dehydrogenase cytochrome B subunit, mitochondrial (sdh3) (Schizosaccharomyces pombe (strain 972 / ATCC 24843) (Fission yeast)).